A 332-amino-acid chain; its full sequence is Azadirone synthase LFS (332 aa).

Residues 181–286 (ANANYTNMFH…RYSTGTFICP (106 aa)) form the Fe2OG dioxygenase domain. 3 residues coordinate Fe cation: H208, D210, and H269. Residue R277 participates in 2-oxoglutarate binding.

The protein belongs to the iron/ascorbate-dependent oxidoreductase family. The cofactor is Fe(2+). Mainly expressed in petioles and, to a lower extent, in roots.

The catalysed reaction is (1S,3bR,4R,5aR,9aR,9bR,11aS)-1-(1-hydroxy-4-oxobutan-2-yl)-3b,6,6,9a,11a-pentamethyl-7-oxo-1H,2H,3bH,4H,5H,5aH,6H,7H,9aH,9bH,10H,11H,11aH-cyclopenta[a]phenanthren-4-yl acetate + 2-oxoglutarate + O2 = azadirone + succinate + CO2 + 2 H2O. The protein operates within secondary metabolite biosynthesis; terpenoid biosynthesis. In terms of biological role, 2-oxoglutarate-Fe(II) type oxidoreductase involved in the biosynthesis of limonoids triterpene natural products such as azadirachtin, an antifeedant widely used as bioinsecticide, and possessing many medicinal applications including anti-tumoral, anti-malarial, anti-rheumatic, antibacterial, anti-inflammatory, anti-pyretic and diuretic effects. Catalyzes the formation of azadirone. This Melia azedarach (Chinaberry tree) protein is Azadirone synthase LFS.